A 184-amino-acid chain; its full sequence is Large ribosomal subunit protein uL5c (184 aa).

The protein belongs to the universal ribosomal protein uL5 family. As to quaternary structure, part of the 50S ribosomal subunit; contacts the 5S rRNA.

The protein localises to the plastid. The protein resides in the chloroplast. Functionally, binds 5S rRNA, forms part of the central protuberance of the 50S subunit. The chain is Large ribosomal subunit protein uL5c (rpl5) from Ostreococcus tauri.